Reading from the N-terminus, the 130-residue chain is Small ribosomal subunit protein uS8 (130 aa).

Belongs to the universal ribosomal protein uS8 family. As to quaternary structure, part of the 30S ribosomal subunit. Contacts proteins S5 and S12.

Functionally, one of the primary rRNA binding proteins, it binds directly to 16S rRNA central domain where it helps coordinate assembly of the platform of the 30S subunit. The chain is Small ribosomal subunit protein uS8 from Pseudomonas syringae pv. tomato (strain ATCC BAA-871 / DC3000).